Here is a 235-residue protein sequence, read N- to C-terminus: RNA pyrophosphohydrolase (235 aa).

The region spanning 6–149 (GFRPNVGIIL…KRGVYEMALT (144 aa)) is the Nudix hydrolase domain. The short motif at 38-59 (GGIDRGENPEQAMFRELHEEVG) is the Nudix box element. The disordered stretch occupies residues 184–235 (ANQSGEPGSFPAAGGIPSYATRPGAPFELPPGATFEPDPQTSFGVNAPTKKT).

The protein belongs to the Nudix hydrolase family. RppH subfamily. It depends on a divalent metal cation as a cofactor.

Functionally, accelerates the degradation of transcripts by removing pyrophosphate from the 5'-end of triphosphorylated RNA, leading to a more labile monophosphorylated state that can stimulate subsequent ribonuclease cleavage. This is RNA pyrophosphohydrolase from Polaromonas naphthalenivorans (strain CJ2).